We begin with the raw amino-acid sequence, 381 residues long: Homoserine O-succinyltransferase (381 aa).

Positions 45-360 constitute an AB hydrolase-1 domain; that stretch reads NAVLVCHALN…PHGHDAFLLD (316 aa). Serine 151 serves as the catalytic Nucleophile. Arginine 221 is a binding site for substrate. Active-site residues include aspartate 321 and histidine 354. Aspartate 355 contacts substrate.

This sequence belongs to the AB hydrolase superfamily. MetX family. In terms of assembly, homodimer.

The protein resides in the cytoplasm. It catalyses the reaction L-homoserine + succinyl-CoA = O-succinyl-L-homoserine + CoA. The protein operates within amino-acid biosynthesis; L-methionine biosynthesis via de novo pathway; O-succinyl-L-homoserine from L-homoserine: step 1/1. Its function is as follows. Transfers a succinyl group from succinyl-CoA to L-homoserine, forming succinyl-L-homoserine. The polypeptide is Homoserine O-succinyltransferase (Burkholderia cenocepacia (strain ATCC BAA-245 / DSM 16553 / LMG 16656 / NCTC 13227 / J2315 / CF5610) (Burkholderia cepacia (strain J2315))).